A 154-amino-acid polypeptide reads, in one-letter code: SsrA-binding protein (154 aa).

The protein belongs to the SmpB family.

It is found in the cytoplasm. Functionally, required for rescue of stalled ribosomes mediated by trans-translation. Binds to transfer-messenger RNA (tmRNA), required for stable association of tmRNA with ribosomes. tmRNA and SmpB together mimic tRNA shape, replacing the anticodon stem-loop with SmpB. tmRNA is encoded by the ssrA gene; the 2 termini fold to resemble tRNA(Ala) and it encodes a 'tag peptide', a short internal open reading frame. During trans-translation Ala-aminoacylated tmRNA acts like a tRNA, entering the A-site of stalled ribosomes, displacing the stalled mRNA. The ribosome then switches to translate the ORF on the tmRNA; the nascent peptide is terminated with the 'tag peptide' encoded by the tmRNA and targeted for degradation. The ribosome is freed to recommence translation, which seems to be the essential function of trans-translation. This is SsrA-binding protein from Synechocystis sp. (strain ATCC 27184 / PCC 6803 / Kazusa).